Here is a 92-residue protein sequence, read N- to C-terminus: Small ribosomal subunit protein uS19 (92 aa).

This sequence belongs to the universal ribosomal protein uS19 family.

Functionally, protein S19 forms a complex with S13 that binds strongly to the 16S ribosomal RNA. The protein is Small ribosomal subunit protein uS19 of Methylorubrum extorquens (strain CM4 / NCIMB 13688) (Methylobacterium extorquens).